The sequence spans 342 residues: MATH domain and coiled-coil domain-containing protein At3g44800 (342 aa).

The region spanning 3 to 129 is the MATH domain; that stretch reads YEKFTWVIKN…NNEVKIVAEV (127 aa). Positions 253–327 form a coiled coil; sequence KVDWLERKLE…ALLEKEKGKV (75 aa).

The polypeptide is MATH domain and coiled-coil domain-containing protein At3g44800 (Arabidopsis thaliana (Mouse-ear cress)).